The chain runs to 137 residues: Large ribosomal subunit protein uL16 (137 aa).

Belongs to the universal ribosomal protein uL16 family. Part of the 50S ribosomal subunit.

Binds 23S rRNA and is also seen to make contacts with the A and possibly P site tRNAs. This Francisella tularensis subsp. tularensis (strain FSC 198) protein is Large ribosomal subunit protein uL16.